The following is a 401-amino-acid chain: Imidazolonepropionase (401 aa).

Residues His-70 and His-72 each contribute to the Fe(3+) site. His-70 and His-72 together coordinate Zn(2+). Residues Arg-79, Tyr-142, and His-175 each coordinate 4-imidazolone-5-propanoate. Tyr-142 contributes to the N-formimidoyl-L-glutamate binding site. Residue His-240 coordinates Fe(3+). His-240 is a Zn(2+) binding site. A 4-imidazolone-5-propanoate-binding site is contributed by Gln-243. Asp-315 contributes to the Fe(3+) binding site. Position 315 (Asp-315) interacts with Zn(2+). N-formimidoyl-L-glutamate contacts are provided by Asn-317 and Gly-319. Ser-320 serves as a coordination point for 4-imidazolone-5-propanoate.

It belongs to the metallo-dependent hydrolases superfamily. HutI family. The cofactor is Zn(2+). Requires Fe(3+) as cofactor.

It localises to the cytoplasm. The enzyme catalyses 4-imidazolone-5-propanoate + H2O = N-formimidoyl-L-glutamate. The protein operates within amino-acid degradation; L-histidine degradation into L-glutamate; N-formimidoyl-L-glutamate from L-histidine: step 3/3. In terms of biological role, catalyzes the hydrolytic cleavage of the carbon-nitrogen bond in imidazolone-5-propanoate to yield N-formimidoyl-L-glutamate. It is the third step in the universal histidine degradation pathway. The chain is Imidazolonepropionase from Ruegeria pomeroyi (strain ATCC 700808 / DSM 15171 / DSS-3) (Silicibacter pomeroyi).